The chain runs to 502 residues: Ubiquilin (502 aa).

A Ubiquitin-like domain is found at isoleucine 8–arginine 83. The segment covering proline 84–proline 115 has biased composition (low complexity). Positions proline 84–arginine 136 are disordered. 2 STI1 domains span residues serine 124–isoleucine 157 and asparagine 161–methionine 200. A compositionally biased stretch (polar residues) spans serine 235–aspartate 251. Residues serine 235–serine 294 are disordered. Over residues glutamine 252–glycine 262 the composition is skewed to basic and acidic residues. Residues alanine 274–alanine 290 are compositionally biased toward low complexity. 2 consecutive STI1 domains span residues serine 289–isoleucine 327 and asparagine 351–phenylalanine 387. The 47-residue stretch at proline 455 to serine 501 folds into the UBA domain.

As to expression, expressed in the pharynx, hypodermis, intestine and head neurons. Upon ER stress, expressed predominantly in pharyngeal muscle, hypodermis and intestine.

Functionally, may play a role in the ER-associated protein degradation pathway (ERAD) possibly via its interaction with ER-localized proteins ubxn-4 and cdc-48.1 and/or cdc48.2, providing a link between the polyubiquitinated ERAD substrates and the proteasome. Also plays an important role in the regulation of other protein degradation mechanisms and pathways including ubiquitin-proteasome system (UPS) and autophagy. Mediates the proteasomal targeting of misfolded or accumulated proteins for degradation by binding (via UBA domain) to their polyubiquitin chains and by interacting (via ubiquitin-like domain) with the subunits of the proteasome. Collaborates with POST (F36D4.5) in the export of ubiquitinated proteins from the nucleus to the cytoplasm. Also acts as a regulator of DNA repair by inhibiting homologous recombination repair, thereby redirecting double-strand break repair toward non-homologous end joining (NHEJ). In Caenorhabditis elegans, this protein is Ubiquilin.